The following is a 125-amino-acid chain: uncharacterized protein (125 aa).

The N-terminal 46 residues, 1 to 46 (MFFDTKVLNYPTIHKSISMASTMQRTSSSAASNERQLSQLQRRAPS), are a transit peptide targeting the chloroplast.

Its subcellular location is the plastid. It is found in the chloroplast. This is an uncharacterized protein from Arabidopsis thaliana (Mouse-ear cress).